The chain runs to 626 residues: tRNA uridine 5-carboxymethylaminomethyl modification enzyme MnmG (626 aa).

13-18 (GGGHAG) lines the FAD pocket. 273-287 (GPRYCPSIEDKIHRF) contributes to the NAD(+) binding site.

The protein belongs to the MnmG family. As to quaternary structure, homodimer. Heterotetramer of two MnmE and two MnmG subunits. FAD serves as cofactor.

The protein localises to the cytoplasm. In terms of biological role, NAD-binding protein involved in the addition of a carboxymethylaminomethyl (cmnm) group at the wobble position (U34) of certain tRNAs, forming tRNA-cmnm(5)s(2)U34. This Acinetobacter baumannii (strain ATCC 17978 / DSM 105126 / CIP 53.77 / LMG 1025 / NCDC KC755 / 5377) protein is tRNA uridine 5-carboxymethylaminomethyl modification enzyme MnmG.